Consider the following 322-residue polypeptide: Ribose-phosphate pyrophosphokinase 1 (322 aa).

ATP-binding positions include aspartate 39 to glutamate 41 and arginine 98 to glutamine 99. The Mg(2+) site is built by histidine 132 and aspartate 173. Lysine 196 is a catalytic residue. Residues arginine 198, aspartate 224, and aspartate 228–threonine 232 each bind D-ribose 5-phosphate.

The protein belongs to the ribose-phosphate pyrophosphokinase family. Class I subfamily. As to quaternary structure, homohexamer. Mg(2+) is required as a cofactor.

The protein resides in the cytoplasm. It carries out the reaction D-ribose 5-phosphate + ATP = 5-phospho-alpha-D-ribose 1-diphosphate + AMP + H(+). The protein operates within metabolic intermediate biosynthesis; 5-phospho-alpha-D-ribose 1-diphosphate biosynthesis; 5-phospho-alpha-D-ribose 1-diphosphate from D-ribose 5-phosphate (route I): step 1/1. In terms of biological role, involved in the biosynthesis of the central metabolite phospho-alpha-D-ribosyl-1-pyrophosphate (PRPP) via the transfer of pyrophosphoryl group from ATP to 1-hydroxyl of ribose-5-phosphate (Rib-5-P). The polypeptide is Ribose-phosphate pyrophosphokinase 1 (Streptococcus agalactiae serotype III (strain NEM316)).